The following is a 418-amino-acid chain: AP-3 complex subunit mu-1 (418 aa).

An MHD domain is found at 176–417 (NNEAYFDVVE…VTKAGKFQVR (242 aa)).

Belongs to the adaptor complexes medium subunit family. As to quaternary structure, adaptor protein complex 3 (AP-3) is a heterotetramer composed of two large adaptins (delta-type subunit AP3D1 and beta-type subunit AP3B1 or AP3B2), a medium adaptin (mu-type subunit AP3M1 or AP3M2) and a small adaptin (sigma-type subunit APS1 or AP3S2). Interacts with AGAP1. AP-3 associates with the BLOC-1 complex.

Its subcellular location is the golgi apparatus. It is found in the cytoplasmic vesicle membrane. Part of the AP-3 complex, an adaptor-related complex which is not clathrin-associated. The complex is associated with the Golgi region as well as more peripheral structures. It facilitates the budding of vesicles from the Golgi membrane and may be directly involved in trafficking to lysosomes. In concert with the BLOC-1 complex, AP-3 is required to target cargos into vesicles assembled at cell bodies for delivery into neurites and nerve terminals. The sequence is that of AP-3 complex subunit mu-1 (Ap3m1) from Mus musculus (Mouse).